Reading from the N-terminus, the 346-residue chain is Syntaxin UFE1 (346 aa).

At 1–324 the chain is on the cytoplasmic side; that stretch reads MMSDLTPIFR…RKAKRAAGRT (324 aa). The region spanning 255–317 is the t-SNARE coiled-coil homology domain; that stretch reads LNQKNEQLKK…KKGNKELRKA (63 aa). Residues 325 to 342 form a helical; Anchor for type IV membrane protein membrane-spanning segment; that stretch reads AKMTTYGAIIMGVFILFL. At 343–346 the chain is on the lumenal side; it reads DYVG.

The protein belongs to the syntaxin family. Component of a SNARE complex consisting of UFE1, USE1, SEC20 and SEC22 or YKT6.

The protein resides in the endoplasmic reticulum membrane. Functionally, syntaxin required for targeting and fusion of Golgi-derived retrograde transport vesicles with the ER. This chain is Syntaxin UFE1 (UFE1), found in Saccharomyces cerevisiae (strain ATCC 204508 / S288c) (Baker's yeast).